Here is a 292-residue protein sequence, read N- to C-terminus: 33 kDa chaperonin (292 aa).

Cystine bridges form between cysteine 236–cysteine 238 and cysteine 269–cysteine 272.

This sequence belongs to the HSP33 family. Under oxidizing conditions two disulfide bonds are formed involving the reactive cysteines. Under reducing conditions zinc is bound to the reactive cysteines and the protein is inactive.

It localises to the cytoplasm. Redox regulated molecular chaperone. Protects both thermally unfolding and oxidatively damaged proteins from irreversible aggregation. Plays an important role in the bacterial defense system toward oxidative stress. The sequence is that of 33 kDa chaperonin from Ruminiclostridium cellulolyticum (strain ATCC 35319 / DSM 5812 / JCM 6584 / H10) (Clostridium cellulolyticum).